Consider the following 229-residue polypeptide: Large ribosomal subunit protein uL1 (229 aa).

Belongs to the universal ribosomal protein uL1 family. In terms of assembly, part of the 50S ribosomal subunit.

Binds directly to 23S rRNA. The L1 stalk is quite mobile in the ribosome, and is involved in E site tRNA release. In terms of biological role, protein L1 is also a translational repressor protein, it controls the translation of the L11 operon by binding to its mRNA. In Phytoplasma australiense, this protein is Large ribosomal subunit protein uL1.